Consider the following 209-residue polypeptide: Small ribosomal subunit protein uS4 (209 aa).

Zn(2+) contacts are provided by cysteine 9, cysteine 12, cysteine 26, and cysteine 31. A C4-type zinc finger spans residues 9–31 (CRLCRREGVKLYLKGERCYSPKC). The S4 RNA-binding domain occupies 100–162 (RLDNVVYRLG…RNLELIRQNL (63 aa)).

Belongs to the universal ribosomal protein uS4 family. As to quaternary structure, part of the 30S ribosomal subunit. Contacts protein S5. The interaction surface between S4 and S5 is involved in control of translational fidelity. Zn(2+) serves as cofactor.

One of the primary rRNA binding proteins, it binds directly to 16S rRNA where it helps nucleate assembly of the body and platform of the 30S subunit. In Thermus thermophilus (strain ATCC BAA-163 / DSM 7039 / HB27), this protein is Small ribosomal subunit protein uS4 (rpsD).